We begin with the raw amino-acid sequence, 631 residues long: MAPPGSSAVFLLALTITASTQALTPTHYLTKHDVERLKASLDRPFTSLESAFYSIVGLNSLGAQVPDVKKACAFIKSNLDPSNVDSLFYAAQSSQVLSGCEISVSNETRDLLLAAVSEDSSVAQIYHAVAALSGFGLPLASHEALGALTARLSKEETVLATVQALHTASHLSQQADLRNIVEEIEDLVARLDELGGVYLQFEEGLELTALFVAATYKLMDHVGTEPSIKEDQVIQLMNTIFSKKNFESLSEAFSVASAAAALSQNRYHVPVVVVPEGSASDTQEQAILRLQVSSVLSQPLAQAAVKLEHAKSVASRATVLQKMPFSLVGDVFELNFKNVKLPSGYYDFSVRVEGDNRYIANTVELRVKISTEVGITNVDLSTVDKDQSIAPKTTRVTYPAKAKGTFIADSHQNFALFFQLVDVNTGAELTPHQTFVRLHNQKTGQEVVFVAEPDNKNVYKFELDTSERKIEFDSASGTYTLYLIIGDATLKNPILWNVADVVIKFPEEEAPSTVLSQNLFTPKQEIQHLFREPEKRPPTVVSNTFTALILSPLLLLFALWIRIGANVSNFTFAPSTVIFHLGHAAMLGLMYVYWTQLNMFQTLKYLAVLGTVTFLAGNRMLAQQAVKRTAH.

Positions 1-22 (MAPPGSSAVFLLALTITASTQA) are cleaved as a signal peptide. Residues 23–540 (LTPTHYLTKH…REPEKRPPTV (518 aa)) are Lumenal-facing. The N-linked (GlcNAc...) asparagine glycan is linked to Asn106. Lys154 participates in a covalent cross-link: Glycyl lysine isopeptide (Lys-Gly) (interchain with G-Cter in ubiquitin). The chain crosses the membrane as a helical span at residues 541 to 561 (VSNTFTALILSPLLLLFALWI). Residues 562–571 (RIGANVSNFT) are Cytoplasmic-facing. Residues 572 to 592 (FAPSTVIFHLGHAAMLGLMYV) form a helical membrane-spanning segment. Over 593-596 (YWTQ) the chain is Lumenal. Residues 597 to 617 (LNMFQTLKYLAVLGTVTFLAG) form a helical membrane-spanning segment. The Cytoplasmic segment spans residues 618–631 (NRMLAQQAVKRTAH).

Belongs to the SWP1 family. As to quaternary structure, component of the oligosaccharyltransferase (OST) complex. OST exists in two different complex forms which contain common core subunits RPN1, RPN2, OST48, OST4, DAD1 and TMEM258, either STT3A or STT3B as catalytic subunits, and form-specific accessory subunits. STT3A complex assembly occurs through the formation of 3 subcomplexes. Subcomplex 1 contains RPN1 and TMEM258, subcomplex 2 contains the STT3A-specific subunits STT3A, DC2/OSTC, and KCP2 as well as the core subunit OST4, and subcomplex 3 contains RPN2, DAD1, and OST48. The STT3A complex can form stable complexes with the Sec61 complex or with both the Sec61 and TRAP complexes. Interacts with DDI2. Interacts with TMEM35A/NACHO.

The protein resides in the endoplasmic reticulum. Its subcellular location is the endoplasmic reticulum membrane. Its pathway is protein modification; protein glycosylation. Its function is as follows. Subunit of the oligosaccharyl transferase (OST) complex that catalyzes the initial transfer of a defined glycan (Glc(3)Man(9)GlcNAc(2) in eukaryotes) from the lipid carrier dolichol-pyrophosphate to an asparagine residue within an Asn-X-Ser/Thr consensus motif in nascent polypeptide chains, the first step in protein N-glycosylation. N-glycosylation occurs cotranslationally and the complex associates with the Sec61 complex at the channel-forming translocon complex that mediates protein translocation across the endoplasmic reticulum (ER). All subunits are required for a maximal enzyme activity. The polypeptide is Dolichyl-diphosphooligosaccharide--protein glycosyltransferase subunit 2 (Rattus norvegicus (Rat)).